The chain runs to 197 residues: Probable GTP-binding protein EngB (197 aa).

The EngB-type G domain occupies 24 to 197; the sequence is DIPEIALAGR…WDAILEKVNK (174 aa). GTP is bound by residues 32-39, 59-63, 77-80, 144-147, and 176-178; these read GRSNVGKS, GKTQL, DVPG, TKAD, and FSS. Residues serine 39 and threonine 61 each contribute to the Mg(2+) site.

Belongs to the TRAFAC class TrmE-Era-EngA-EngB-Septin-like GTPase superfamily. EngB GTPase family. The cofactor is Mg(2+).

Necessary for normal cell division and for the maintenance of normal septation. The polypeptide is Probable GTP-binding protein EngB (Streptococcus gordonii (strain Challis / ATCC 35105 / BCRC 15272 / CH1 / DL1 / V288)).